The following is a 292-amino-acid chain: 4-diphosphocytidyl-2-C-methyl-D-erythritol kinase (292 aa).

Residue lysine 13 is part of the active site. Position 97–107 (proline 97–serine 107) interacts with ATP. Residue aspartate 139 is part of the active site.

Belongs to the GHMP kinase family. IspE subfamily.

The catalysed reaction is 4-CDP-2-C-methyl-D-erythritol + ATP = 4-CDP-2-C-methyl-D-erythritol 2-phosphate + ADP + H(+). It participates in isoprenoid biosynthesis; isopentenyl diphosphate biosynthesis via DXP pathway; isopentenyl diphosphate from 1-deoxy-D-xylulose 5-phosphate: step 3/6. In terms of biological role, catalyzes the phosphorylation of the position 2 hydroxy group of 4-diphosphocytidyl-2C-methyl-D-erythritol. The sequence is that of 4-diphosphocytidyl-2-C-methyl-D-erythritol kinase from Bacillus thuringiensis (strain Al Hakam).